The chain runs to 382 residues: Cytochrome b (382 aa).

4 helical membrane-spanning segments follow: residues 36–56 (FGSL…FLTM), 80–101 (WLIR…YLHI), 116–136 (WFIG…GYVL), and 181–201 (FYTF…IHLL). His-86 and His-100 together coordinate heme b. Heme b contacts are provided by His-185 and His-199. His-204 contributes to the a ubiquinone binding site. Helical transmembrane passes span 229–249 (YKDL…TLSN), 291–311 (LGGV…PLTF), 323–343 (INQF…WIGA), and 350–370 (YIIT…LNPL).

Belongs to the cytochrome b family. In terms of assembly, the main subunits of complex b-c1 are: cytochrome b, cytochrome c1 and the Rieske protein. Heme b serves as cofactor.

It localises to the mitochondrion inner membrane. Component of the ubiquinol-cytochrome c reductase complex (complex III or cytochrome b-c1 complex) that is part of the mitochondrial respiratory chain. The b-c1 complex mediates electron transfer from ubiquinol to cytochrome c. Contributes to the generation of a proton gradient across the mitochondrial membrane that is then used for ATP synthesis. This Samia ricini (Indian eri silkmoth) protein is Cytochrome b (MT-CYB).